The chain runs to 332 residues: MKVTFSQLKEAFNQVLLKRGVAAETADACADMFARTTESGVYSHGVNRFPRFIQQLDNGDIIPEAKPQRITSLGAIEQWDAQRSIGNLTAKKMMDRAMELASDHGIGLVALRNANHWMRGGSYGWQAAEKGYIGICWTNSIAVMPPWGAKECRIGTNPLIVAIPSTPITMVDMSMSMFSYGMLEVNRLAGRELPVDGGFDDEGNLTKEPGVIEKNRRILPMGYWKGSGLSIVLDMIATLLSNGSSVAEVTQENSDEYGVSQIFIAIEVDKLIDGATRDAKLQRIMDFITTAERADENVAVRLPGHEFTRLLEENRRDGITVDDSVWAKIQAL.

The Proton donor role is filled by His44. Residues 168–174, 224–225, and 304–306 contribute to the NAD(+) site; these read ITMVDMS, WK, and GHE.

Belongs to the LDH2/MDH2 oxidoreductase family. DlgD subfamily. As to quaternary structure, homodimer.

The protein resides in the cytoplasm. It carries out the reaction 3-dehydro-L-gulonate + NAD(+) = 2,3-dioxo-L-gulonate + NADH + H(+). It catalyses the reaction 3-dehydro-L-gulonate + NADP(+) = 2,3-dioxo-L-gulonate + NADPH + H(+). Its function is as follows. Catalyzes the reduction of 2,3-diketo-L-gulonate in the presence of NADH, to form 3-keto-L-gulonate. This chain is 2,3-diketo-L-gulonate reductase, found in Klebsiella pneumoniae (strain 342).